We begin with the raw amino-acid sequence, 216 residues long: MQPDLALAPEAVLDAAGFQALVGATDAQIEDLTRFQTLLAEWNEVMNLVGPLTIATYWTRHALDSAQLIPLAPEATAWADLGAGAGLPGVVLAILLKGRAGAKVHLVESMIKRCRFLEVVAKDLDLPVQIHNARAEDLKLKVDIVTARACAPMTKLLGFAEPYLRNGAVGLFLKGQDVETELSEARKAWTFESELRTSQSDPRGRIVQVKRLSRVR.

Residues Gly-82, Leu-87, 135–136 (AE), and Arg-148 contribute to the S-adenosyl-L-methionine site.

The protein belongs to the methyltransferase superfamily. RNA methyltransferase RsmG family.

It localises to the cytoplasm. The catalysed reaction is guanosine(527) in 16S rRNA + S-adenosyl-L-methionine = N(7)-methylguanosine(527) in 16S rRNA + S-adenosyl-L-homocysteine. Functionally, specifically methylates the N7 position of guanine in position 527 of 16S rRNA. In Caulobacter vibrioides (strain ATCC 19089 / CIP 103742 / CB 15) (Caulobacter crescentus), this protein is Ribosomal RNA small subunit methyltransferase G.